Reading from the N-terminus, the 549-residue chain is CTP synthase (549 aa).

The tract at residues 1-267 is amidoligase domain; it reads MTKFVFVTGG…AAQVLSLLNL (267 aa). A CTP-binding site is contributed by Ser13. Residue Ser13 coordinates UTP. ATP contacts are provided by residues 14–19 and Asp71; that span reads SIGKGI. The Mg(2+) site is built by Asp71 and Glu141. CTP is bound by residues 148–150, 188–193, and Lys224; these read DIE and KTKPTQ. UTP is bound by residues 188–193 and Lys224; that span reads KTKPTQ. A Glutamine amidotransferase type-1 domain is found at 292–534; sequence EIAIVGKYVR…VQAARTHSSD (243 aa). Gly354 contributes to the L-glutamine binding site. The active-site Nucleophile; for glutamine hydrolysis is the Cys381. L-glutamine is bound by residues 382-385, Glu405, and Arg462; that span reads LGMQ. Residues His507 and Glu509 contribute to the active site.

The protein belongs to the CTP synthase family. Homotetramer.

The catalysed reaction is UTP + L-glutamine + ATP + H2O = CTP + L-glutamate + ADP + phosphate + 2 H(+). It catalyses the reaction L-glutamine + H2O = L-glutamate + NH4(+). The enzyme catalyses UTP + NH4(+) + ATP = CTP + ADP + phosphate + 2 H(+). It participates in pyrimidine metabolism; CTP biosynthesis via de novo pathway; CTP from UDP: step 2/2. Allosterically activated by GTP, when glutamine is the substrate; GTP has no effect on the reaction when ammonia is the substrate. The allosteric effector GTP functions by stabilizing the protein conformation that binds the tetrahedral intermediate(s) formed during glutamine hydrolysis. Inhibited by the product CTP, via allosteric rather than competitive inhibition. In terms of biological role, catalyzes the ATP-dependent amination of UTP to CTP with either L-glutamine or ammonia as the source of nitrogen. Regulates intracellular CTP levels through interactions with the four ribonucleotide triphosphates. The sequence is that of CTP synthase from Cyanothece sp. (strain PCC 7425 / ATCC 29141).